The chain runs to 230 residues: MTTLTARPEAITFDPQQSALIVVDMQNAYATPGGYLDLAGFDVSTTRPVIANIQTAVTAARAAGMLIIWFQNGWDEQYVEAGGPGSPNFHKSNALKTMRKQPQLQGKLLAKGSWDYQLVDELVPQPGDIVLPKPRYSGFFNTPLDSILRSRGIRHLVFTGIATNVCVESTLRDGFFLEYFGVVLEDATHQAGPEFAQKAALFNIETFFGWVSDVETFCDALSPTSFARIA.

The Proton acceptor role is filled by D24. K133 is a catalytic residue. C166 serves as the catalytic Nucleophile.

It belongs to the isochorismatase family. RutB subfamily.

The enzyme catalyses (Z)-3-ureidoacrylate + H2O + H(+) = (Z)-3-aminoacrylate + NH4(+) + CO2. It carries out the reaction (Z)-3-ureidoacrylate + H2O = (Z)-3-aminoacrylate + carbamate + H(+). It catalyses the reaction (Z)-2-methylureidoacrylate + H2O + H(+) = (Z)-2-methylaminoacrylate + NH4(+) + CO2. In terms of biological role, hydrolyzes ureidoacrylate to form aminoacrylate and carbamate. The carbamate hydrolyzes spontaneously, thereby releasing one of the nitrogen atoms of the pyrimidine ring as ammonia and one of its carbon atoms as CO2. The protein is Ureidoacrylate amidohydrolase RutB of Escherichia coli O111:H- (strain 11128 / EHEC).